Consider the following 267-residue polypeptide: Sulfur carrier protein FdhD (267 aa).

The active-site Cysteine persulfide intermediate is Cys-108.

This sequence belongs to the FdhD family.

It is found in the cytoplasm. Functionally, required for formate dehydrogenase (FDH) activity. Acts as a sulfur carrier protein that transfers sulfur from IscS to the molybdenum cofactor prior to its insertion into FDH. The sequence is that of Sulfur carrier protein FdhD from Shouchella clausii (strain KSM-K16) (Alkalihalobacillus clausii).